We begin with the raw amino-acid sequence, 544 residues long: uncharacterized protein (544 aa).

The next 12 helical transmembrane spans lie at 41–61, 71–91, 106–126, 166–186, 196–216, 240–260, 280–300, 332–352, 391–411, 413–433, 451–471, and 484–504; these read FSAW…PSFA, AGTP…QCVA, GLYY…AAWL, YQIF…SSMP, WGTV…LAVA, WSNG…MSGY, AIVM…LCIA, VALT…CMVA, VVGI…NAIF, VGAI…VFFV, INGY…CFPQ, and WTCV…FVSA.

It belongs to the amino acid-polyamine-organocation (APC) superfamily.

Its subcellular location is the membrane. This is an uncharacterized protein from Schizosaccharomyces pombe (strain 972 / ATCC 24843) (Fission yeast).